The sequence spans 81 residues: Protein Vpu (81 aa).

The Extracellular segment spans residues 1–7 (MQSLQVL). Residues 8 to 28 (AIVALVVATIIAIVVWTIVFI) form a helical membrane-spanning segment. Residues 29–81 (EYRKILRQRKIDRLINRITERAEDSGNESDGDQEELSALVERGHLAPWDVDDL) lie on the Cytoplasmic side of the membrane. The tract at residues 50-81 (AEDSGNESDGDQEELSALVERGHLAPWDVDDL) is disordered. 2 positions are modified to phosphoserine; by host CK2: Ser53 and Ser57. Positions 53–63 (SGNESDGDQEE) are enriched in acidic residues.

This sequence belongs to the HIV-1 VPU protein family. In terms of assembly, homopentamer. Interacts with host CD4 and BRTC; these interactions induce proteasomal degradation of CD4. Interacts with host BST2; this interaction leads to the degradation of host BST2. Interacts with host FBXW11. Interacts with host AP1M1; this interaction plays a role in the mistrafficking and subsequent degradation of host BST2. Interacts with host RANBP2; this interaction allows Vpu to down-regulate host BLM sumoylation. Post-translationally, phosphorylated by host CK2. This phosphorylation is necessary for interaction with human BTRC and degradation of CD4.

Its subcellular location is the host membrane. Ion channel activity is inhibited by hexamethylene amiloride in vitro. Its function is as follows. Enhances virion budding by targeting host CD4 and Tetherin/BST2 to proteasome degradation. Degradation of CD4 prevents any unwanted premature interactions between viral Env and its host receptor CD4 in the endoplasmic reticulum. Degradation of antiretroviral protein Tetherin/BST2 is important for virion budding, as BST2 tethers new viral particles to the host cell membrane. Mechanistically, Vpu bridges either CD4 or BST2 to BTRC, a substrate recognition subunit of the Skp1/Cullin/F-box protein E3 ubiquitin ligase, induces their ubiquitination and subsequent proteasomal degradation. The alteration of the E3 ligase specificity by Vpu seems to promote the degradation of host IKBKB, leading to NF-kappa-B down-regulation and subsequent apoptosis. Acts as a viroporin that forms an oligomeric ion channel in membranes. Modulates the host DNA repair mechanisms to promote degradation of nuclear viral cDNA in cells that are already productively infected in order to suppress immune sensing and proviral hyper-integration (superinfection). Manipulates PML-NBs and modulates SUMOylation of host BLM protein thereby enhancing its DNA-end processing activity toward viral unintegrated linear DNA. Also inhibits RAD52-mediated homologous repair of viral cDNA, preventing the generation of dead-end circular forms of single copies of the long terminal repeat and permitting sustained nucleolytic attack. The protein is Protein Vpu of Human immunodeficiency virus type 1 group M subtype B (isolate YU-2) (HIV-1).